Here is a 117-residue protein sequence, read N- to C-terminus: MARVTVEDCVDKVPNRFELVMLASHRAREIAAGDPLTIDRDNDKNPVVSLREIADETQSADDLRERLIESHQTQIEVDEPEEDAMALLQGVEQDRPAQDDMSEEQMLRALMEAQGQK.

The protein belongs to the RNA polymerase subunit omega family. The RNAP catalytic core consists of 2 alpha, 1 beta, 1 beta' and 1 omega subunit. When a sigma factor is associated with the core the holoenzyme is formed, which can initiate transcription.

It carries out the reaction RNA(n) + a ribonucleoside 5'-triphosphate = RNA(n+1) + diphosphate. In terms of biological role, promotes RNA polymerase assembly. Latches the N- and C-terminal regions of the beta' subunit thereby facilitating its interaction with the beta and alpha subunits. The sequence is that of DNA-directed RNA polymerase subunit omega from Jannaschia sp. (strain CCS1).